Here is a 90-residue protein sequence, read N- to C-terminus: Small ribosomal subunit protein bS20 (90 aa).

The segment at 1–29 (MANTASAEKRNRQAQKRRARNVQVRTGVK) is disordered.

This sequence belongs to the bacterial ribosomal protein bS20 family.

In terms of biological role, binds directly to 16S ribosomal RNA. The polypeptide is Small ribosomal subunit protein bS20 (Anaeromyxobacter sp. (strain Fw109-5)).